A 149-amino-acid chain; its full sequence is Large ribosomal subunit protein eL8 (149 aa).

Belongs to the eukaryotic ribosomal protein eL8 family. As to quaternary structure, part of the 50S ribosomal subunit. Probably part of the RNase P complex.

The protein localises to the cytoplasm. Multifunctional RNA-binding protein that recognizes the K-turn motif in ribosomal RNA, the RNA component of RNase P, box H/ACA, box C/D and box C'/D' sRNAs. This chain is Large ribosomal subunit protein eL8, found in Pyrobaculum calidifontis (strain DSM 21063 / JCM 11548 / VA1).